Consider the following 486-residue polypeptide: Cardiolipin synthase A (486 aa).

2 consecutive transmembrane segments (helical) span residues 3–23 (TFYTVISWLAIFGYWLLIASV) and 38–58 (MAWLLIIYILPLVGIIAYLSF). 2 consecutive PLD phosphodiesterase domains span residues 219–246 (MDLRQHRKVVLIDNFIAYTGSMNLVDPR) and 399–426 (EGGLLHTKSVLVDGQLSLVGTVNLDMRS). Active-site residues include His224, Lys226, Asp231, His404, Lys406, and Asp411.

The protein belongs to the phospholipase D family. Cardiolipin synthase subfamily. ClsA sub-subfamily.

The protein localises to the cell inner membrane. The catalysed reaction is 2 a 1,2-diacyl-sn-glycero-3-phospho-(1'-sn-glycerol) = a cardiolipin + glycerol. Catalyzes the reversible phosphatidyl group transfer from one phosphatidylglycerol molecule to another to form cardiolipin (CL) (diphosphatidylglycerol) and glycerol. The protein is Cardiolipin synthase A of Edwardsiella ictaluri (strain 93-146).